The chain runs to 363 residues: Chorismate synthase (363 aa).

Residues arginine 48 and arginine 54 each coordinate NADP(+). Residues 125–127 (RSS), 237–238 (NA), glycine 277, 292–296 (KPTSS), and arginine 318 each bind FMN.

Belongs to the chorismate synthase family. Homotetramer. FMNH2 is required as a cofactor.

It catalyses the reaction 5-O-(1-carboxyvinyl)-3-phosphoshikimate = chorismate + phosphate. It functions in the pathway metabolic intermediate biosynthesis; chorismate biosynthesis; chorismate from D-erythrose 4-phosphate and phosphoenolpyruvate: step 7/7. Catalyzes the anti-1,4-elimination of the C-3 phosphate and the C-6 proR hydrogen from 5-enolpyruvylshikimate-3-phosphate (EPSP) to yield chorismate, which is the branch point compound that serves as the starting substrate for the three terminal pathways of aromatic amino acid biosynthesis. This reaction introduces a second double bond into the aromatic ring system. This chain is Chorismate synthase, found in Pseudomonas savastanoi pv. phaseolicola (strain 1448A / Race 6) (Pseudomonas syringae pv. phaseolicola (strain 1448A / Race 6)).